A 339-amino-acid polypeptide reads, in one-letter code: DNA-directed RNA polymerase subunit alpha (339 aa).

The tract at residues M1–E233 is alpha N-terminal domain (alpha-NTD). An alpha C-terminal domain (alpha-CTD) region spans residues K264–F339.

Belongs to the RNA polymerase alpha chain family. In terms of assembly, in plastids the minimal PEP RNA polymerase catalytic core is composed of four subunits: alpha, beta, beta', and beta''. When a (nuclear-encoded) sigma factor is associated with the core the holoenzyme is formed, which can initiate transcription.

Its subcellular location is the plastid. The protein resides in the chloroplast. The catalysed reaction is RNA(n) + a ribonucleoside 5'-triphosphate = RNA(n+1) + diphosphate. Functionally, DNA-dependent RNA polymerase catalyzes the transcription of DNA into RNA using the four ribonucleoside triphosphates as substrates. The polypeptide is DNA-directed RNA polymerase subunit alpha (Agropyron cristatum (Crested wheatgrass)).